The chain runs to 339 residues: Phenylalanine--tRNA ligase alpha subunit (339 aa).

Residues 1–14 (MEAKLKQLEEKAKQ) are compositionally biased toward basic and acidic residues. Positions 1-20 (MEAKLKQLEEKAKQDIQAST) are disordered. Mg(2+) is bound at residue Glu254.

This sequence belongs to the class-II aminoacyl-tRNA synthetase family. Phe-tRNA synthetase alpha subunit type 1 subfamily. In terms of assembly, tetramer of two alpha and two beta subunits. Requires Mg(2+) as cofactor.

The protein localises to the cytoplasm. It carries out the reaction tRNA(Phe) + L-phenylalanine + ATP = L-phenylalanyl-tRNA(Phe) + AMP + diphosphate + H(+). In Alkaliphilus metalliredigens (strain QYMF), this protein is Phenylalanine--tRNA ligase alpha subunit.